The following is a 126-amino-acid chain: MARIAGVDLPRDKRIEIALTYIYGIGLTRSKEILAKTGVNPDTRTRDLTDADIAALRAAIDEYQVEGDLRRLEAMNIKRLMDIGCYRGRRHRLGLPVRGQRTRTNARTRRGSRRTVAGKKKPAAKK.

The tract at residues 96 to 126 (PVRGQRTRTNARTRRGSRRTVAGKKKPAAKK) is disordered. The span at 100–126 (QRTRTNARTRRGSRRTVAGKKKPAAKK) shows a compositional bias: basic residues.

Belongs to the universal ribosomal protein uS13 family. Part of the 30S ribosomal subunit. Forms a loose heterodimer with protein S19. Forms two bridges to the 50S subunit in the 70S ribosome.

Functionally, located at the top of the head of the 30S subunit, it contacts several helices of the 16S rRNA. In the 70S ribosome it contacts the 23S rRNA (bridge B1a) and protein L5 of the 50S subunit (bridge B1b), connecting the 2 subunits; these bridges are implicated in subunit movement. Contacts the tRNAs in the A and P-sites. The polypeptide is Small ribosomal subunit protein uS13 (Thermosynechococcus vestitus (strain NIES-2133 / IAM M-273 / BP-1)).